The following is a 517-amino-acid chain: Ribonuclease Y (517 aa).

A helical membrane pass occupies residues 2-22; the sequence is EILVYIIIGIAIFILSLLVGI. In terms of domain architecture, KH spans 207-267; the sequence is TTSTVALPTD…LRREIAKRTL (61 aa). Residues 333–426 enclose the HD domain; the sequence is VLEHSIEVAQ…VAASDALSAS (94 aa).

It belongs to the RNase Y family.

The protein localises to the cell membrane. Its function is as follows. Endoribonuclease that initiates mRNA decay. In Petrotoga mobilis (strain DSM 10674 / SJ95), this protein is Ribonuclease Y.